Here is a 649-residue protein sequence, read N- to C-terminus: Nitrosuccinic acid synthase npaA (649 aa).

The protein belongs to the nitrosuccinic acid synthase family. FAD is required as a cofactor.

The catalysed reaction is L-aspartate + 3 NADPH + 3 O2 + 2 H(+) = 2-nitrobutanedioate + 3 NADP(+) + 4 H2O. The protein operates within mycotoxin biosynthesis. In terms of biological role, nitrosuccinic acid synthase; part of the gene cluster that mediates the biosynthesis of the deadly neurotoxic nitroalkane 3-nitropropanoic acid (3-NPA) that acts as an antimetabolite of succinate and irreversibly inhibits succinate dehydrogenase and disrupts mitochondrial oxidative phosphorylation. NpaA catalyzes the iterative oxidation of L-aspartic acid to nitrosuccinic acid (2-nitrobutanedioate). Alternative amino acid substrates such as L-glutamate and D-aspartate are not accepted by npaA as a substrate, showing the strict substrate specificity toward L-aspartate. The nitrosuccinic acid decarboxylase npaB then facilitates decarboxylation of Nitrosuccinic acid to produce 3-NPA. The chain is Nitrosuccinic acid synthase npaA from Aspergillus oryzae (strain ATCC 42149 / RIB 40) (Yellow koji mold).